The primary structure comprises 123 residues: Phosphoribosyl-AMP cyclohydrolase (123 aa).

Asp-73 is a binding site for Mg(2+). Cys-74 contacts Zn(2+). Asp-75 and Asp-77 together coordinate Mg(2+). Zn(2+)-binding residues include Cys-90 and Cys-97.

Belongs to the PRA-CH family. In terms of assembly, homodimer. Requires Mg(2+) as cofactor. Zn(2+) serves as cofactor.

The protein resides in the cytoplasm. It catalyses the reaction 1-(5-phospho-beta-D-ribosyl)-5'-AMP + H2O = 1-(5-phospho-beta-D-ribosyl)-5-[(5-phospho-beta-D-ribosylamino)methylideneamino]imidazole-4-carboxamide. It participates in amino-acid biosynthesis; L-histidine biosynthesis; L-histidine from 5-phospho-alpha-D-ribose 1-diphosphate: step 3/9. In terms of biological role, catalyzes the hydrolysis of the adenine ring of phosphoribosyl-AMP. This is Phosphoribosyl-AMP cyclohydrolase from Methanoregula boonei (strain DSM 21154 / JCM 14090 / 6A8).